Reading from the N-terminus, the 338-residue chain is tRNA N6-adenosine threonylcarbamoyltransferase (338 aa).

Fe cation contacts are provided by His110, His114, and Tyr131. Residues 131–135 (YVSGG), Asp163, Asp184, and Asn268 each bind substrate. Asp296 contributes to the Fe cation binding site.

Belongs to the KAE1 / TsaD family. Fe(2+) serves as cofactor.

The protein localises to the cytoplasm. The enzyme catalyses L-threonylcarbamoyladenylate + adenosine(37) in tRNA = N(6)-L-threonylcarbamoyladenosine(37) in tRNA + AMP + H(+). Required for the formation of a threonylcarbamoyl group on adenosine at position 37 (t(6)A37) in tRNAs that read codons beginning with adenine. Is probably involved in the transfer of the threonylcarbamoyl moiety of threonylcarbamoyl-AMP (TC-AMP) to the N6 group of A37. This Staphylothermus marinus (strain ATCC 43588 / DSM 3639 / JCM 9404 / F1) protein is tRNA N6-adenosine threonylcarbamoyltransferase.